Consider the following 500-residue polypeptide: Cobyric acid synthase (500 aa).

In terms of domain architecture, GATase cobBQ-type spans 251 to 449; the sequence is KLNIVIPIMP…LHGVFDHPDA (199 aa). C332 acts as the Nucleophile in catalysis. H441 is an active-site residue.

It belongs to the CobB/CobQ family. CobQ subfamily.

It functions in the pathway cofactor biosynthesis; adenosylcobalamin biosynthesis. Catalyzes amidations at positions B, D, E, and G on adenosylcobyrinic A,C-diamide. NH(2) groups are provided by glutamine, and one molecule of ATP is hydrogenolyzed for each amidation. This chain is Cobyric acid synthase, found in Marinomonas sp. (strain MWYL1).